We begin with the raw amino-acid sequence, 319 residues long: Ribosomal RNA large subunit methyltransferase F (319 aa).

The protein belongs to the methyltransferase superfamily. METTL16/RlmF family.

The protein resides in the cytoplasm. The enzyme catalyses adenosine(1618) in 23S rRNA + S-adenosyl-L-methionine = N(6)-methyladenosine(1618) in 23S rRNA + S-adenosyl-L-homocysteine + H(+). In terms of biological role, specifically methylates the adenine in position 1618 of 23S rRNA. This Aliivibrio fischeri (strain ATCC 700601 / ES114) (Vibrio fischeri) protein is Ribosomal RNA large subunit methyltransferase F.